The sequence spans 234 residues: (5-formylfuran-3-yl)methyl phosphate synthase (234 aa).

The active-site Schiff-base intermediate with substrate is the Lys-27. Catalysis depends on Lys-85, which acts as the Proton acceptor.

Belongs to the MfnB family.

The catalysed reaction is 2 D-glyceraldehyde 3-phosphate = 4-(hydroxymethyl)-2-furancarboxaldehyde phosphate + phosphate + 2 H2O. The protein operates within cofactor biosynthesis; methanofuran biosynthesis. In terms of biological role, catalyzes the formation of 4-(hydroxymethyl)-2-furancarboxaldehyde phosphate (4-HFC-P) from two molecules of glyceraldehyde-3-P (GA-3-P). In Methanosarcina mazei (strain ATCC BAA-159 / DSM 3647 / Goe1 / Go1 / JCM 11833 / OCM 88) (Methanosarcina frisia), this protein is (5-formylfuran-3-yl)methyl phosphate synthase.